The sequence spans 92 residues: Large ribosomal subunit protein eL43 (92 aa).

Residues 39-60 form a C4-type zinc finger; that stretch reads CEFCGKFAVKRKAVGIWGCKDC.

Belongs to the eukaryotic ribosomal protein eL43 family.

In Pseudotsuga menziesii (Douglas-fir), this protein is Large ribosomal subunit protein eL43 (RPL37A).